The following is a 114-amino-acid chain: Fumarate reductase subunit D (114 aa).

Helical transmembrane passes span 24–44, 50–70, and 92–112; these read VSAI…PFGL, LITF…TIFP, and GGFI…FAVI.

Belongs to the FrdD family. As to quaternary structure, part of an enzyme complex containing four subunits: a flavoprotein (FrdA), an iron-sulfur protein (FrdB), and two hydrophobic anchor proteins (FrdC and FrdD).

The protein resides in the cell inner membrane. Its function is as follows. Anchors the catalytic components of the fumarate reductase complex to the cell membrane, binds quinones. The sequence is that of Fumarate reductase subunit D from Haemophilus influenzae (strain 86-028NP).